The sequence spans 397 residues: Lysophospholipid transporter LplT (397 aa).

Over methionine 1 to lysine 17 the chain is Periplasmic. Residues alanine 18–leucine 38 form a helical membrane-spanning segment. Topologically, residues alanine 39 to proline 52 are cytoplasmic. A helical transmembrane segment spans residues isoleucine 53–alanine 73. The Periplasmic segment spans residues aspartate 74–leucine 90. The chain crosses the membrane as a helical span at residues leucine 91–valine 111. The Cytoplasmic portion of the chain corresponds to glycine 112–threonine 144. The chain crosses the membrane as a helical span at residues isoleucine 145 to valine 165. Residue alanine 166 is a topological domain, periplasmic. Residues leucine 167–leucine 187 form a helical membrane-spanning segment. The Cytoplasmic segment spans residues alanine 188–serine 226. The chain crosses the membrane as a helical span at residues leucine 227 to leucine 247. The Periplasmic segment spans residues glycine 248–threonine 256. Residues tyrosine 257 to valine 277 traverse the membrane as a helical segment. Residues threonine 278–glutamate 280 lie on the Cytoplasmic side of the membrane. Residues threonine 281–leucine 301 form a helical membrane-spanning segment. Residues glutamine 302–glutamate 304 are Periplasmic-facing. Residues leucine 305–proline 325 form a helical membrane-spanning segment. Over leucine 326–alanine 343 the chain is Cytoplasmic. A helical membrane pass occupies residues isoleucine 344–leucine 364. At alanine 365–valine 366 the chain is on the periplasmic side. The chain crosses the membrane as a helical span at residues methionine 367–isoleucine 387. Residues threonine 388–histidine 397 are Cytoplasmic-facing.

Belongs to the major facilitator superfamily. LplT (TC 2.A.1.42) family.

Its subcellular location is the cell inner membrane. Catalyzes the facilitated diffusion of 2-acyl-glycero-3-phosphoethanolamine (2-acyl-GPE) into the cell. In Escherichia coli O7:K1 (strain IAI39 / ExPEC), this protein is Lysophospholipid transporter LplT.